The primary structure comprises 200 residues: MELQVVGANALTVSETTFGREFNEALIHQVVVAYAAGARQGSRAQKTRAEVSGSGKKPWRQKGTGRARSGDIRSPIWRSGGVTFAAKPQDHSQKVNKKMYRGAIKSILSELVRQDRLVVVDKFEIDAPKTKVLVQKLKELALEDVLIITASLDENLFLAARNLYKVDVRDAQGIDPVSLIAFDKVVVTVDAVKQIEEMLA.

A disordered region spans residues 43 to 71 (RAQKTRAEVSGSGKKPWRQKGTGRARSGD).

The protein belongs to the universal ribosomal protein uL4 family. Part of the 50S ribosomal subunit.

In terms of biological role, one of the primary rRNA binding proteins, this protein initially binds near the 5'-end of the 23S rRNA. It is important during the early stages of 50S assembly. It makes multiple contacts with different domains of the 23S rRNA in the assembled 50S subunit and ribosome. Its function is as follows. Forms part of the polypeptide exit tunnel. This Aggregatibacter actinomycetemcomitans (Actinobacillus actinomycetemcomitans) protein is Large ribosomal subunit protein uL4.